The chain runs to 333 residues: DNA-directed RNA polymerase subunit alpha (333 aa).

Positions 1–234 (MQSSVNEFLT…QQLAAFVDLK (234 aa)) are alpha N-terminal domain (alpha-NTD). The alpha C-terminal domain (alpha-CTD) stretch occupies residues 248–333 (IDPILLRPVD…SLKKDDKATA (86 aa)).

This sequence belongs to the RNA polymerase alpha chain family. As to quaternary structure, homodimer. The RNAP catalytic core consists of 2 alpha, 1 beta, 1 beta' and 1 omega subunit. When a sigma factor is associated with the core the holoenzyme is formed, which can initiate transcription.

The catalysed reaction is RNA(n) + a ribonucleoside 5'-triphosphate = RNA(n+1) + diphosphate. Functionally, DNA-dependent RNA polymerase catalyzes the transcription of DNA into RNA using the four ribonucleoside triphosphates as substrates. This Stutzerimonas stutzeri (strain A1501) (Pseudomonas stutzeri) protein is DNA-directed RNA polymerase subunit alpha.